The primary structure comprises 445 residues: Phosphoglucosamine mutase (445 aa).

S102 serves as the catalytic Phosphoserine intermediate. Mg(2+)-binding residues include S102, D241, D243, and D245. S102 is subject to Phosphoserine.

Belongs to the phosphohexose mutase family. Requires Mg(2+) as cofactor. In terms of processing, activated by phosphorylation.

The enzyme catalyses alpha-D-glucosamine 1-phosphate = D-glucosamine 6-phosphate. Functionally, catalyzes the conversion of glucosamine-6-phosphate to glucosamine-1-phosphate. In Acinetobacter baumannii (strain SDF), this protein is Phosphoglucosamine mutase.